A 457-amino-acid chain; its full sequence is Siroheme synthase (457 aa).

The interval 4–202 (LPIFCQLRDR…ANADEKAVNA (199 aa)) is precorrin-2 dehydrogenase /sirohydrochlorin ferrochelatase. Residues 22–23 (DV) and 43–44 (LT) contribute to the NAD(+) site. Ser-128 carries the phosphoserine modification. A uroporphyrinogen-III C-methyltransferase region spans residues 216 to 448 (GEVVLVGAGP…IIVGRVVALR (233 aa)). Pro-225 serves as a coordination point for S-adenosyl-L-methionine. Asp-248 acts as the Proton acceptor in catalysis. The active-site Proton donor is the Lys-270. S-adenosyl-L-methionine-binding positions include 301–303 (GGD), Ile-306, 331–332 (TA), Met-382, Gly-411, and Ala-437.

This sequence in the N-terminal section; belongs to the precorrin-2 dehydrogenase / sirohydrochlorin ferrochelatase family. It in the C-terminal section; belongs to the precorrin methyltransferase family. As to quaternary structure, homodimer.

The enzyme catalyses uroporphyrinogen III + 2 S-adenosyl-L-methionine = precorrin-2 + 2 S-adenosyl-L-homocysteine + H(+). It carries out the reaction precorrin-2 + NAD(+) = sirohydrochlorin + NADH + 2 H(+). It catalyses the reaction siroheme + 2 H(+) = sirohydrochlorin + Fe(2+). It participates in cofactor biosynthesis; adenosylcobalamin biosynthesis; precorrin-2 from uroporphyrinogen III: step 1/1. It functions in the pathway cofactor biosynthesis; adenosylcobalamin biosynthesis; sirohydrochlorin from precorrin-2: step 1/1. The protein operates within porphyrin-containing compound metabolism; siroheme biosynthesis; precorrin-2 from uroporphyrinogen III: step 1/1. Its pathway is porphyrin-containing compound metabolism; siroheme biosynthesis; siroheme from sirohydrochlorin: step 1/1. It participates in porphyrin-containing compound metabolism; siroheme biosynthesis; sirohydrochlorin from precorrin-2: step 1/1. Multifunctional enzyme that catalyzes the SAM-dependent methylations of uroporphyrinogen III at position C-2 and C-7 to form precorrin-2 via precorrin-1. Then it catalyzes the NAD-dependent ring dehydrogenation of precorrin-2 to yield sirohydrochlorin. Finally, it catalyzes the ferrochelation of sirohydrochlorin to yield siroheme. The polypeptide is Siroheme synthase (Salmonella typhimurium (strain LT2 / SGSC1412 / ATCC 700720)).